The primary structure comprises 126 residues: Prefoldin subunit beta (126 aa).

It belongs to the prefoldin subunit beta family. In terms of assembly, heterohexamer of two alpha and four beta subunits.

The protein localises to the cytoplasm. Molecular chaperone capable of stabilizing a range of proteins. Seems to fulfill an ATP-independent, HSP70-like function in archaeal de novo protein folding. The chain is Prefoldin subunit beta (pfdB) from Pyrobaculum aerophilum (strain ATCC 51768 / DSM 7523 / JCM 9630 / CIP 104966 / NBRC 100827 / IM2).